Here is a 345-residue protein sequence, read N- to C-terminus: Phenylalanine--tRNA ligase alpha subunit (345 aa).

Position 266 (Glu-266) interacts with Mg(2+).

It belongs to the class-II aminoacyl-tRNA synthetase family. Phe-tRNA synthetase alpha subunit type 1 subfamily. As to quaternary structure, tetramer of two alpha and two beta subunits. The cofactor is Mg(2+).

It localises to the cytoplasm. It carries out the reaction tRNA(Phe) + L-phenylalanine + ATP = L-phenylalanyl-tRNA(Phe) + AMP + diphosphate + H(+). In Burkholderia lata (strain ATCC 17760 / DSM 23089 / LMG 22485 / NCIMB 9086 / R18194 / 383), this protein is Phenylalanine--tRNA ligase alpha subunit.